The sequence spans 608 residues: Granule-bound starch synthase 1, chloroplastic/amyloplastic (608 aa).

The transit peptide at 1–78 (MATVIAAHFV…NGRPAAKIIC (78 aa)) directs the protein to the chloroplast. K96 is a binding site for ADP-alpha-D-glucose. The disordered stretch occupies residues 587–608 (GSEPGTEGEEIAPLAKENVPTP).

It belongs to the glycosyltransferase 1 family. Bacterial/plant glycogen synthase subfamily. As to expression, synthesized in a number of different organs, but most abundantly in tubers.

The protein localises to the plastid. The protein resides in the chloroplast. Its subcellular location is the amyloplast. It carries out the reaction an NDP-alpha-D-glucose + [(1-&gt;4)-alpha-D-glucosyl](n) = [(1-&gt;4)-alpha-D-glucosyl](n+1) + a ribonucleoside 5'-diphosphate + H(+). Its pathway is glycan biosynthesis; starch biosynthesis. Functionally, responsible for the synthesis of amylose in reserve starch. This Manihot esculenta (Cassava) protein is Granule-bound starch synthase 1, chloroplastic/amyloplastic (WAXY).